Consider the following 149-residue polypeptide: Nucleoside diphosphate kinase (149 aa).

ATP-binding residues include Lys-9, Phe-57, Arg-85, Thr-91, Arg-102, and Asn-112. The active-site Pros-phosphohistidine intermediate is the His-115.

It belongs to the NDK family. Mg(2+) serves as cofactor.

The protein resides in the cytoplasm. The enzyme catalyses a 2'-deoxyribonucleoside 5'-diphosphate + ATP = a 2'-deoxyribonucleoside 5'-triphosphate + ADP. It catalyses the reaction a ribonucleoside 5'-diphosphate + ATP = a ribonucleoside 5'-triphosphate + ADP. Functionally, major role in the synthesis of nucleoside triphosphates other than ATP. The ATP gamma phosphate is transferred to the NDP beta phosphate via a ping-pong mechanism, using a phosphorylated active-site intermediate. The sequence is that of Nucleoside diphosphate kinase from Methanococcoides burtonii (strain DSM 6242 / NBRC 107633 / OCM 468 / ACE-M).